Reading from the N-terminus, the 161-residue chain is Small ribosomal subunit protein uS9 (161 aa).

The protein belongs to the universal ribosomal protein uS9 family.

This chain is Small ribosomal subunit protein uS9, found in Bartonella henselae (strain ATCC 49882 / DSM 28221 / CCUG 30454 / Houston 1) (Rochalimaea henselae).